Here is a 204-residue protein sequence, read N- to C-terminus: Outer-membrane lipoprotein carrier protein (204 aa).

The first 21 residues, 1-21, serve as a signal peptide directing secretion; the sequence is MKKYLNLTALLLVGISNVTWA.

It belongs to the LolA family. In terms of assembly, monomer.

It localises to the periplasm. Participates in the translocation of lipoproteins from the inner membrane to the outer membrane. Only forms a complex with a lipoprotein if the residue after the N-terminal Cys is not an aspartate (The Asp acts as a targeting signal to indicate that the lipoprotein should stay in the inner membrane). This is Outer-membrane lipoprotein carrier protein from Histophilus somni (strain 129Pt) (Haemophilus somnus).